Reading from the N-terminus, the 334-residue chain is Protein-methionine-sulfoxide reductase catalytic subunit MsrP (334 aa).

Residues 1–44 constitute a signal peptide (tat-type signal); that stretch reads MKAVNPLTENDVTPESLFNARRRTVLKMLGMSAAALSLPGAARA. Mo-molybdopterin-binding positions include N88, 91–92, C146, T181, N233, R238, and 249–251; these read YE and GIK.

The protein belongs to the MsrP family. In terms of assembly, heterodimer of a catalytic subunit (MsrP) and a heme-binding subunit (MsrQ). Mo-molybdopterin serves as cofactor. Post-translationally, predicted to be exported by the Tat system. The position of the signal peptide cleavage has not been experimentally proven.

The protein resides in the periplasm. The enzyme catalyses L-methionyl-[protein] + a quinone + H2O = L-methionyl-(S)-S-oxide-[protein] + a quinol. It catalyses the reaction L-methionyl-[protein] + a quinone + H2O = L-methionyl-(R)-S-oxide-[protein] + a quinol. In terms of biological role, part of the MsrPQ system that repairs oxidized periplasmic proteins containing methionine sulfoxide residues (Met-O), using respiratory chain electrons. Thus protects these proteins from oxidative-stress damage caused by reactive species of oxygen and chlorine generated by the host defense mechanisms. MsrPQ is essential for the maintenance of envelope integrity under bleach stress, rescuing a wide series of structurally unrelated periplasmic proteins from methionine oxidation. The catalytic subunit MsrP is non-stereospecific, being able to reduce both (R-) and (S-) diastereoisomers of methionine sulfoxide. The sequence is that of Protein-methionine-sulfoxide reductase catalytic subunit MsrP from Erwinia tasmaniensis (strain DSM 17950 / CFBP 7177 / CIP 109463 / NCPPB 4357 / Et1/99).